We begin with the raw amino-acid sequence, 458 residues long: GTPase Der (458 aa).

2 EngA-type G domains span residues 4–169 and 178–353; these read PSIA…PKDF and VMMS…TQHR. GTP-binding positions include 10–17, 57–61, 120–123, 184–191, 231–235, and 296–299; these read GRPNVGKS, DTGGL, NKCE, DTAGI, and NKWD. Positions 354-439 constitute a KH-like domain; sequence MRVTTSVVNE…PIILLWRGKQ (86 aa).

The protein belongs to the TRAFAC class TrmE-Era-EngA-EngB-Septin-like GTPase superfamily. EngA (Der) GTPase family. As to quaternary structure, associates with the 50S ribosomal subunit.

In terms of biological role, GTPase that plays an essential role in the late steps of ribosome biogenesis. The sequence is that of GTPase Der from Prochlorococcus marinus (strain MIT 9515).